The primary structure comprises 645 residues: Acetyl-coenzyme A synthetase (645 aa).

Residues 190 to 193 (RGSK), threonine 308, and asparagine 332 contribute to the CoA site. ATP contacts are provided by residues 384-386 (GEP), 408-413 (DTWWQT), aspartate 497, and arginine 512. Serine 520 contributes to the CoA binding site. An ATP-binding site is contributed by arginine 523. Positions 534, 536, and 539 each coordinate Mg(2+). Residue arginine 581 coordinates CoA. N6-acetyllysine is present on lysine 606.

The protein belongs to the ATP-dependent AMP-binding enzyme family. Mg(2+) serves as cofactor. In terms of processing, acetylated. Deacetylation by the SIR2-homolog deacetylase activates the enzyme.

It catalyses the reaction acetate + ATP + CoA = acetyl-CoA + AMP + diphosphate. Functionally, catalyzes the conversion of acetate into acetyl-CoA (AcCoA), an essential intermediate at the junction of anabolic and catabolic pathways. AcsA undergoes a two-step reaction. In the first half reaction, AcsA combines acetate with ATP to form acetyl-adenylate (AcAMP) intermediate. In the second half reaction, it can then transfer the acetyl group from AcAMP to the sulfhydryl group of CoA, forming the product AcCoA. This Bdellovibrio bacteriovorus (strain ATCC 15356 / DSM 50701 / NCIMB 9529 / HD100) protein is Acetyl-coenzyme A synthetase.